The primary structure comprises 147 residues: 3-dehydroquinate dehydratase (147 aa).

The active-site Proton acceptor is the tyrosine 24. Positions 75, 81, and 88 each coordinate substrate. The active-site Proton donor is the histidine 101. Substrate is bound by residues 102–103 (LS) and arginine 112.

It belongs to the type-II 3-dehydroquinase family. As to quaternary structure, homododecamer.

The catalysed reaction is 3-dehydroquinate = 3-dehydroshikimate + H2O. It functions in the pathway metabolic intermediate biosynthesis; chorismate biosynthesis; chorismate from D-erythrose 4-phosphate and phosphoenolpyruvate: step 3/7. Its function is as follows. Catalyzes a trans-dehydration via an enolate intermediate. In Caulobacter sp. (strain K31), this protein is 3-dehydroquinate dehydratase.